We begin with the raw amino-acid sequence, 487 residues long: L-asparagine permease 2 (487 aa).

Transmembrane regions (helical) follow at residues 26–46, 50–70, 98–118, 133–153, 163–183, 214–234, 256–276, 290–310, 341–361, 369–389, 414–434, and 440–460; these read QLQM…GAGG, SAGP…FLIL, VAFV…IVDT, PIPQ…MNLI, FWAS…GTVF, IVLV…VGIA, IACF…YTAY, IGID…ALSS, TGVP…GIIL, AFEI…ATIV, SPFS…LMYF, and PWMI…WYLV.

It belongs to the amino acid-polyamine-organocation (APC) superfamily. Amino acid transporter (AAT) (TC 2.A.3.1) family.

Its subcellular location is the cell membrane. Its function is as follows. Dual function in both nitrogen assimilation and in protection against acid stress during infection. Involved in asparagine uptake. This is L-asparagine permease 2 (ansP2) from Mycobacterium bovis (strain ATCC BAA-935 / AF2122/97).